Reading from the N-terminus, the 152-residue chain is Cornifin-A (152 aa).

Residues 20–40 (EVKQPCQPPPQEPCAPKTKEP) are disordered. A run of 14 repeats spans residues 27–34 (PPPQEPCA), 35–42 (PKTKEPCH), 43–49 (PIPEPCN), 50–57 (PKVPEPCQ), 58–65 (PKVPEPCQ), 66–73 (PKVPEPCQ), 74–81 (PKVPEPCQ), 82–89 (PKVPEPCQ), 90–97 (PKVPEPCQ), 98–105 (PKVPEPCH), 106–113 (PKAPEPCH), 114–121 (PVVPEPCQ), 122–129 (PVAPEPCQ), and 130–137 (PVVPEPCP). The segment at 27–137 (PPPQEPCAPK…CQPVVPEPCP (111 aa)) is 14 X 8 AA approximate tandem repeats.

Belongs to the cornifin (SPRR) family. In squamous epithelia lining the nasal vestibule and in the hard palate.

It localises to the cytoplasm. Cross-linked envelope protein of keratinocytes. It is a keratinocyte protein that first appears in the cell cytosol, but ultimately becomes cross-linked to membrane proteins by transglutaminase. All that results in the formation of an insoluble envelope beneath the plasma membrane. The chain is Cornifin-A (Sprr1a) from Rattus norvegicus (Rat).